Reading from the N-terminus, the 133-residue chain is Small ribosomal subunit protein uS8 (133 aa).

Belongs to the universal ribosomal protein uS8 family. In terms of assembly, part of the 30S ribosomal subunit. Contacts proteins S5 and S12.

Its function is as follows. One of the primary rRNA binding proteins, it binds directly to 16S rRNA central domain where it helps coordinate assembly of the platform of the 30S subunit. The polypeptide is Small ribosomal subunit protein uS8 (Prochlorococcus marinus (strain MIT 9515)).